The following is a 235-amino-acid chain: Phosphoribosylaminoimidazole-succinocarboxamide synthase (235 aa).

The protein belongs to the SAICAR synthetase family.

The catalysed reaction is 5-amino-1-(5-phospho-D-ribosyl)imidazole-4-carboxylate + L-aspartate + ATP = (2S)-2-[5-amino-1-(5-phospho-beta-D-ribosyl)imidazole-4-carboxamido]succinate + ADP + phosphate + 2 H(+). It functions in the pathway purine metabolism; IMP biosynthesis via de novo pathway; 5-amino-1-(5-phospho-D-ribosyl)imidazole-4-carboxamide from 5-amino-1-(5-phospho-D-ribosyl)imidazole-4-carboxylate: step 1/2. The polypeptide is Phosphoribosylaminoimidazole-succinocarboxamide synthase (Streptococcus thermophilus (strain ATCC BAA-250 / LMG 18311)).